Reading from the N-terminus, the 70-residue chain is MKPGIHPEYAEITATCTCGNVIKVNSTAGKSLHLDVCGACHPFYTGTQKIVDTGGRIDKFNKRFGALGKK.

Zn(2+)-binding residues include Cys16, Cys18, Cys37, and Cys40.

This sequence belongs to the bacterial ribosomal protein bL31 family. Type A subfamily. Part of the 50S ribosomal subunit. The cofactor is Zn(2+).

Functionally, binds the 23S rRNA. The chain is Large ribosomal subunit protein bL31 from Shewanella woodyi (strain ATCC 51908 / MS32).